A 990-amino-acid chain; its full sequence is Sister chromatid cohesion protein PDS5 homolog E (990 aa).

HEAT repeat units follow at residues 31–57, 58–96, 153–190, 191–228, and 232–269; these read DATLSLLEVMESLLATVEQDLSSSVQK, ALHPPMRALVSADLLRNPDSDVRVSVVSCLTEIMRITAP, DLVLEMFQRFLKIIRPDHPQLVLVSMETIMITVIDESE, EVPMDLLEILLTTVKKDSQDVSPAALTLVEKVLSSCTC, and PCIMEALKSSGTSLDMYSPVVSSICQSEFATTQAHNDV. A disordered region spans residues 262-565; that stretch reads TTQAHNDVKP…AGEEVESNTN (304 aa). The segment covering 267–281 has biased composition (basic and acidic residues); sequence NDVKPKDNEADEKIS. Residues 302–314 show a composition bias toward basic residues; the sequence is KGTRSKRSARGGT. 2 stretches are compositionally biased toward polar residues: residues 328 to 342 and 394 to 410; these read EGLSESTDAETASGS and VGQTNQSVVISLSSSGR. Composition is skewed to basic and acidic residues over residues 421-430, 448-477, and 503-512; these read TKMEETDHDV, PAKEDLTKSNVKKHEDGIKTGKSSKKEKAD, and VHSDAKKKNS. The short motif at 458-465 is the Nuclear localization signal 1 element; the sequence is VKKHEDGI. 2 short sequence motifs (nuclear localization signal) span residues 539 to 546 and 583 to 590; these read TKKSEQAP and DKKFYEGV. Positions 653–966 are disordered; that stretch reads KKRKIVSKNV…VGNEAEEDDQ (314 aa). Over residues 662 to 673 the composition is skewed to low complexity; that stretch reads VEPSSSPEVRSS. Short sequence motifs (nuclear localization signal) lie at residues 677–684 and 715–722; these read MKKKDSVT and LKKLNGEP. The span at 727 to 742 shows a compositional bias: basic residues; the sequence is GRTGKKQKVTQAMHRK. The segment covering 746–760 has biased composition (acidic residues); it reads DCDEQEDLETKDEED. 3 stretches are compositionally biased toward basic and acidic residues: residues 761–810, 819–890, and 898–947; these read SLKL…KTNG, TDGK…KETN, and EEQK…DKET.

The protein belongs to the PDS5 family. As to quaternary structure, interacts with the cohesin complex.

Its subcellular location is the nucleus. Functionally, cohesin cofactor dispensable during the meiotic division but playing an important role in DNA repair by homologous recombination (HR) probably by helping SMC5/SMC6 complex. Regulator of sister chromatid cohesion in mitosis which may stabilize cohesin complex association with chromatin. May couple sister chromatid cohesion during mitosis to DNA replication. Cohesion ensures that chromosome partitioning is accurate in both meiotic and mitotic cells and plays an important role in DNA repair. This Arabidopsis thaliana (Mouse-ear cress) protein is Sister chromatid cohesion protein PDS5 homolog E.